A 165-amino-acid polypeptide reads, in one-letter code: Cysteine-rich hydrophobic domain-containing protein 2 (165 aa).

A coiled-coil region spans residues 1 to 26 (MADFDEIYEEEEDEERALEEQLLKYS). The short motif at 88-106 (CGCLCCCCTLGCSMWPVIC) is the CHIC motif (Cys-rich) element.

Belongs to the CHIC family. Post-translationally, palmitoylation in the CHIC motif is required for membrane association.

It localises to the membrane. It is found in the golgi apparatus. In Mus musculus (Mouse), this protein is Cysteine-rich hydrophobic domain-containing protein 2 (Chic2).